Consider the following 44-residue polypeptide: Large ribosomal subunit protein bL34 (44 aa).

Residues 1-26 (MQRTLGGTNRKRKRTSGFRARMRTPD) form a disordered region. Residues 9–22 (NRKRKRTSGFRARM) are compositionally biased toward basic residues.

Belongs to the bacterial ribosomal protein bL34 family.

In Trichormus variabilis (strain ATCC 29413 / PCC 7937) (Anabaena variabilis), this protein is Large ribosomal subunit protein bL34.